Reading from the N-terminus, the 872-residue chain is Alanine--tRNA ligase (872 aa).

Positions 567, 571, 669, and 673 each coordinate Zn(2+).

This sequence belongs to the class-II aminoacyl-tRNA synthetase family. It depends on Zn(2+) as a cofactor.

It is found in the cytoplasm. The catalysed reaction is tRNA(Ala) + L-alanine + ATP = L-alanyl-tRNA(Ala) + AMP + diphosphate. In terms of biological role, catalyzes the attachment of alanine to tRNA(Ala) in a two-step reaction: alanine is first activated by ATP to form Ala-AMP and then transferred to the acceptor end of tRNA(Ala). Also edits incorrectly charged Ser-tRNA(Ala) and Gly-tRNA(Ala) via its editing domain. This chain is Alanine--tRNA ligase, found in Streptococcus mutans serotype c (strain ATCC 700610 / UA159).